The primary structure comprises 413 residues: Dolichyl-diphosphooligosaccharide--protein glycosyltransferase 48 kDa subunit (413 aa).

Residues 1-383 (GPRSLVLLEN…QYERFIPSAY (383 aa)) lie on the Lumenal side of the membrane. The chain crosses the membrane as a helical span at residues 384 to 404 (PYYAGAFSMMVGLFMFSIVFL). The Cytoplasmic segment spans residues 405–413 (HMKEKEKSD).

It belongs to the DDOST 48 kDa subunit family. As to quaternary structure, component of the oligosaccharyltransferase (OST) complex.

Its subcellular location is the endoplasmic reticulum. The protein localises to the endoplasmic reticulum membrane. It participates in protein modification; protein glycosylation. In terms of biological role, subunit of the oligosaccharyl transferase (OST) complex that catalyzes the initial transfer of a defined glycan (Glc(3)Man(9)GlcNAc(2) in eukaryotes) from the lipid carrier dolichol-pyrophosphate to an asparagine residue within an Asn-X-Ser/Thr consensus motif in nascent polypeptide chains, the first step in protein N-glycosylation. N-glycosylation occurs cotranslationally and the complex associates with the Sec61 complex at the channel-forming translocon complex that mediates protein translocation across the endoplasmic reticulum (ER). All subunits are required for a maximal enzyme activity. Required for the assembly of both SST3A- and SS3B-containing OST complexes. The sequence is that of Dolichyl-diphosphooligosaccharide--protein glycosyltransferase 48 kDa subunit from Gallus gallus (Chicken).